The sequence spans 381 residues: Probable G-protein coupled receptor 34 (381 aa).

Over 1–61 (MRSHTITMTT…LLSTVLTTSY (61 aa)) the chain is Extracellular. N28, N36, and N42 each carry an N-linked (GlcNAc...) asparagine glycan. Residues 62–82 (SVIFIVGLVGNIIALYVFLGI) form a helical membrane-spanning segment. Topologically, residues 83–88 (HRKRNS) are cytoplasmic. Residues 89 to 109 (IQIYLLNVAIADLLLIFCLPF) form a helical membrane-spanning segment. Topologically, residues 110-128 (RIMYHINQNKWTLGVILCK) are extracellular. C127 and C204 are joined by a disulfide. A helical transmembrane segment spans residues 129–149 (VVGTLFYMNMYISIILLGFIS). Residues 150–171 (LDRYIKINRSIQQRKAITTKQS) lie on the Cytoplasmic side of the membrane. The helical transmembrane segment at 172 to 192 (IYVCCIVWMLALGGFLTMIIL) threads the bilayer. At 193–216 (TLKKGGHNSTMCFHYRDKHNAKGE) the chain is on the extracellular side. The N-linked (GlcNAc...) asparagine glycan is linked to N200. The helical transmembrane segment at 217–237 (AIFNFILVVMFWLIFLLIILS) threads the bilayer. The Cytoplasmic portion of the chain corresponds to 238-269 (YIKIGKNLLRISKRRSKFPNSGKYATTARNSF). The chain crosses the membrane as a helical span at residues 270–290 (IVLIIFTICFVPYHAFRFIYI). At 291-310 (SSQLNVSSCYWKEIVHKTNE) the chain is on the extracellular side. N295 is a glycosylation site (N-linked (GlcNAc...) asparagine). The chain crosses the membrane as a helical span at residues 311-331 (IMLVLSSFNSCLDPVMYFLMS). The Cytoplasmic portion of the chain corresponds to 332–381 (SNIRKIMCQLLFRRFQGEPSRSESTSEFKPGYSLHDTSVAVKIQSSSKST).

Belongs to the G-protein coupled receptor 1 family.

Its subcellular location is the cell membrane. Its function is as follows. G-protein-coupled receptor of lysophosphatidylserine (LysoPS) that plays different roles in immune response. Acts a damage-sensing receptor that triggers tissue repair upon recognition of dying neutrophils. Mechanistically, apoptotic neutrophils release lysophosphatydilserine that are recognized by type 3 innate lymphoid cells (ILC3s) via GPR34, which activates downstream PI3K-AKT and RAS-ERK signaling pathways leading to STAT3 activation and IL-22 production. Plays an important role in microglial function, controlling morphology and phagocytosis. This is Probable G-protein coupled receptor 34 (GPR34) from Gorilla gorilla gorilla (Western lowland gorilla).